The following is a 391-amino-acid chain: MSAEAKMTTSTATQAGAEALERLRQWPGEHRVAVGLSGGVDSSLTAALMVEAGWEVEGLTLWLMSGKGACCAEGLVDAAGICQQLGVPHHVVDSRDTFVREIVQGLVDGYRAGITPLPCSKCNRSVKFGPMLAWAEQERNLPRIATGHYARIRLDREDGRWKLLRGLDRRKDQSYFLYDLPQEVLARVVFPLGELTKADTRLEAGRHGLRTADKPESQDLCLADHHGSMRAFLDAYIPPRDGEIVLQDGTVVGQHDGIEHFTIGQRKGLGIAWSEPLHVVKLDAAMNQVVVATRAEAGRTGCEVGAMNWVSIAPPPLDSPMEVEVQVRYRSEPVRAHLICIEATANDRAKERPHRCKLTFQEPQFSITPGQGAVLYDGEVVLGGGLIDSPV.

Residues 35–42 (GLSGGVDS) and Leu61 each bind ATP. Residue Cys122 is the Nucleophile of the active site. An intrachain disulfide couples Cys122 to Cys221. Gly147 contributes to the ATP binding site. The segment at 171 to 173 (KDQ) is interaction with tRNA. Cys221 functions as the Cysteine persulfide intermediate in the catalytic mechanism. Positions 328–329 (RY) are interaction with tRNA.

It belongs to the MnmA/TRMU family.

It is found in the cytoplasm. It catalyses the reaction S-sulfanyl-L-cysteinyl-[protein] + uridine(34) in tRNA + AH2 + ATP = 2-thiouridine(34) in tRNA + L-cysteinyl-[protein] + A + AMP + diphosphate + H(+). Its function is as follows. Catalyzes the 2-thiolation of uridine at the wobble position (U34) of tRNA, leading to the formation of s(2)U34. The polypeptide is tRNA-specific 2-thiouridylase MnmA (Synechococcus sp. (strain CC9311)).